The chain runs to 450 residues: Chromosomal replication initiator protein DnaA (450 aa).

The segment at 1-71 (MEDVWLQAQS…SVRSLTDSHF (71 aa)) is domain I, interacts with DnaA modulators. Residues 71–113 (FQVELQVAARQQEKTAKSPRKSHTEDELGPVESEKCAPAEFST) are domain II. The interval 82-103 (QEKTAKSPRKSHTEDELGPVES) is disordered. A domain III, AAA+ region region spans residues 114–330 (NLNAKYTFDT…GMLIRLGAVA (217 aa)). Residues G158, G160, K161, and T162 each coordinate ATP. Positions 331–450 (SLTGKNITLD…IETLRKGLLN (120 aa)) are domain IV, binds dsDNA.

The protein belongs to the DnaA family. As to quaternary structure, oligomerizes as a right-handed, spiral filament on DNA at oriC.

It localises to the cytoplasm. Its function is as follows. Plays an essential role in the initiation and regulation of chromosomal replication. ATP-DnaA binds to the origin of replication (oriC) to initiate formation of the DNA replication initiation complex once per cell cycle. Binds the DnaA box (a 9 base pair repeat at the origin) and separates the double-stranded (ds)DNA. Forms a right-handed helical filament on oriC DNA; dsDNA binds to the exterior of the filament while single-stranded (ss)DNA is stabiized in the filament's interior. The ATP-DnaA-oriC complex binds and stabilizes one strand of the AT-rich DNA unwinding element (DUE), permitting loading of DNA polymerase. After initiation quickly degrades to an ADP-DnaA complex that is not apt for DNA replication. Binds acidic phospholipids. This is Chromosomal replication initiator protein DnaA from Geobacter metallireducens (strain ATCC 53774 / DSM 7210 / GS-15).